The primary structure comprises 113 residues: U11-theraphotoxin-Hhn1a (113 aa).

A signal peptide spans 1–21 (MNTVRVTFLLVFVLAVSLGQA). Residues 22–74 (DKDENRMEMQEKTEQGKGYLDFAENLLPQKLEELEAKLLEEDSEESRNSRQKR) constitute a propeptide that is removed on maturation. Positions 59–69 (LLEEDSEESRN) are enriched in basic and acidic residues. The tract at residues 59 to 83 (LLEEDSEESRNSRQKRCIGEGVPCD) is disordered. Intrachain disulfides connect cysteine 75/cysteine 90, cysteine 82/cysteine 95, and cysteine 89/cysteine 110.

This sequence belongs to the neurotoxin 14 (magi-1) family. 01 (HNTX-16) subfamily. Expressed by the venom gland.

Its subcellular location is the secreted. Its function is as follows. Probable ion channel inhibitor. The protein is U11-theraphotoxin-Hhn1a of Cyriopagopus hainanus (Chinese bird spider).